Here is a 148-residue protein sequence, read N- to C-terminus: Snaclec B9 (148 aa).

A signal peptide spans 1-24 (MGRFIFVSFGLLVVFLSLSGTGAA). Intrachain disulfides connect C27–C38, C55–C144, and C121–C136. The C-type lectin domain maps to 34-145 (YDQHCYKVFD…CRLLGHFVCK (112 aa)). 2 N-linked (GlcNAc...) asparagine glycosylation sites follow: N57 and N60.

Belongs to the snaclec family. Heterodimer; disulfide-linked. As to expression, expressed by the venom gland.

It localises to the secreted. Interferes with one step of hemostasis (modulation of platelet aggregation, or coagulation cascade, for example). The chain is Snaclec B9 from Macrovipera lebetinus (Levantine viper).